The primary structure comprises 32 residues: NGWNDNKTFILIGSASWAALVLLVGSLNSFVI.

Residues Phe-9–Val-31 traverse the membrane as a helical segment.

It belongs to the PsbZ family. In terms of assembly, PSII is composed of 1 copy each of membrane proteins PsbA, PsbB, PsbC, PsbD, PsbE, PsbF, PsbH, PsbI, PsbJ, PsbK, PsbL, PsbM, PsbT, PsbY, PsbZ, Psb30/Ycf12, at least 3 peripheral proteins of the oxygen-evolving complex and a large number of cofactors. It forms dimeric complexes.

The protein resides in the plastid. It is found in the chloroplast thylakoid membrane. May control the interaction of photosystem II (PSII) cores with the light-harvesting antenna, regulates electron flow through the 2 photosystem reaction centers. PSII is a light-driven water plastoquinone oxidoreductase, using light energy to abstract electrons from H(2)O, generating a proton gradient subsequently used for ATP formation. This is Photosystem II reaction center protein Z from Euglena viridis (Cercaria viridis).